Reading from the N-terminus, the 600-residue chain is UvrABC system protein C (600 aa).

Positions 15–92 (DKPGCYLMKD…IKKYQPYYNV (78 aa)) constitute a GIY-YIG domain. The UVR domain occupies 197-232 (SQVKQDLTEKMTQASMNLEFERAAEFRDQLKYIEQT).

This sequence belongs to the UvrC family. Interacts with UvrB in an incision complex.

Its subcellular location is the cytoplasm. Functionally, the UvrABC repair system catalyzes the recognition and processing of DNA lesions. UvrC both incises the 5' and 3' sides of the lesion. The N-terminal half is responsible for the 3' incision and the C-terminal half is responsible for the 5' incision. The chain is UvrABC system protein C from Lactobacillus gasseri (strain ATCC 33323 / DSM 20243 / BCRC 14619 / CIP 102991 / JCM 1131 / KCTC 3163 / NCIMB 11718 / NCTC 13722 / AM63).